The chain runs to 198 residues: Ribonuclease HII (198 aa).

The region spanning 10-198 (HLVAGVDEVG…PVKRALGLVC (189 aa)) is the RNase H type-2 domain. Positions 16, 17, and 108 each coordinate a divalent metal cation.

The protein belongs to the RNase HII family. The cofactor is Mn(2+). Mg(2+) serves as cofactor.

It is found in the cytoplasm. The enzyme catalyses Endonucleolytic cleavage to 5'-phosphomonoester.. Functionally, endonuclease that specifically degrades the RNA of RNA-DNA hybrids. The polypeptide is Ribonuclease HII (Enterobacter sp. (strain 638)).